The primary structure comprises 202 residues: NADH-ubiquinone oxidoreductase chain 6 (202 aa).

5 helical membrane passes run 1–21 (MVTMYFFTLSFGTVASGIMVI), 29–49 (SVFWLVVAFISSAALFILLGV), 52–72 (IALMFIIIYVGAIAILFLFVI), 96–116 (VPIGLAVGTLFFEAIASSWLI), and 156–176 (YYLFILVSFILLVAMLGAIVL).

Belongs to the complex I subunit 6 family.

It is found in the mitochondrion membrane. The enzyme catalyses a ubiquinone + NADH + 5 H(+)(in) = a ubiquinol + NAD(+) + 4 H(+)(out). In terms of biological role, core subunit of the mitochondrial membrane respiratory chain NADH dehydrogenase (Complex I) that is believed to belong to the minimal assembly required for catalysis. Complex I functions in the transfer of electrons from NADH to the respiratory chain. The immediate electron acceptor for the enzyme is believed to be ubiquinone. In Metridium senile (Brown sea anemone), this protein is NADH-ubiquinone oxidoreductase chain 6 (ND6).